The following is a 200-amino-acid chain: NADH-quinone oxidoreductase subunit C (200 aa).

This sequence belongs to the complex I 30 kDa subunit family. As to quaternary structure, NDH-1 is composed of 14 different subunits. Subunits NuoB, C, D, E, F, and G constitute the peripheral sector of the complex.

The protein resides in the cell inner membrane. The catalysed reaction is a quinone + NADH + 5 H(+)(in) = a quinol + NAD(+) + 4 H(+)(out). Functionally, NDH-1 shuttles electrons from NADH, via FMN and iron-sulfur (Fe-S) centers, to quinones in the respiratory chain. The immediate electron acceptor for the enzyme in this species is believed to be ubiquinone. Couples the redox reaction to proton translocation (for every two electrons transferred, four hydrogen ions are translocated across the cytoplasmic membrane), and thus conserves the redox energy in a proton gradient. The protein is NADH-quinone oxidoreductase subunit C of Burkholderia mallei (strain NCTC 10247).